A 1081-amino-acid polypeptide reads, in one-letter code: DNA polymerase catalytic subunit (1081 aa).

Belongs to the DNA polymerase type-B family. In terms of assembly, forms a complex with the ssDNA-binding protein UL29, the DNA polymerase processivity factor, and the alkaline exonuclease. Interacts with the putative helicase-primase complex subunit UL8; this interaction may coordinate leading and lagging strand DNA synthesis at the replication fork.

It is found in the host nucleus. The catalysed reaction is DNA(n) + a 2'-deoxyribonucleoside 5'-triphosphate = DNA(n+1) + diphosphate. The enzyme catalyses Endonucleolytic cleavage to 5'-phosphomonoester.. Its function is as follows. Replicates viral genomic DNA. The replication complex is composed of six viral proteins: the DNA polymerase, processivity factor, primase, primase-associated factor, helicase, and ssDNA-binding protein. Additionally, the polymerase contains an intrinsic ribonuclease H (RNase H) activity that specifically degrades RNA/DNA heteroduplexes or duplex DNA substrates in the 5' to 3' direction. Therefore, it can catalyze the excision of the RNA primers that initiate the synthesis of Okazaki fragments at a replication fork during viral DNA replication. The polypeptide is DNA polymerase catalytic subunit (UL30) (Psittacid herpesvirus 1 (isolate Amazon parrot/-/97-0001/1997) (PsHV-1)).